The following is a 108-amino-acid chain: Nucleoid-associated protein BH02310 (108 aa).

It belongs to the YbaB/EbfC family. In terms of assembly, homodimer.

The protein resides in the cytoplasm. It localises to the nucleoid. Its function is as follows. Binds to DNA and alters its conformation. May be involved in regulation of gene expression, nucleoid organization and DNA protection. The polypeptide is Nucleoid-associated protein BH02310 (Bartonella henselae (strain ATCC 49882 / DSM 28221 / CCUG 30454 / Houston 1) (Rochalimaea henselae)).